The following is an 873-amino-acid chain: DNA mismatch repair protein MutS (873 aa).

ATP is bound at residue 625–632; it reads GPNMGGKS.

The protein belongs to the DNA mismatch repair MutS family.

This protein is involved in the repair of mismatches in DNA. It is possible that it carries out the mismatch recognition step. This protein has a weak ATPase activity. This Xanthomonas euvesicatoria pv. vesicatoria (strain 85-10) (Xanthomonas campestris pv. vesicatoria) protein is DNA mismatch repair protein MutS.